The following is a 254-amino-acid chain: Winged helix repair factor 1 (254 aa).

A Bipartite nuclear localization signal motif is present at residues 4-21 (KRHHLIPETFGVKRRRKR). 3 winged helix domain regions span residues 32–104 (EPGS…GIIF), 120–179 (PYAG…LAVP), and 180–254 (GAGR…LPET).

It belongs to the STK19 family. Monomer in solution. Homodimer; when bound to DNA. Component of a transcription-coupled nucleotide excision repair (TC-NER) complex composed of STK19, ERCC6, ERCC8, DDA1, DDB1, ELOF1 and UVSSA which assembles and interacts with the multiprotein RNA polymerase II complex when it stalls at DNA lesions. Monocytes, hepatocytes, epithelial cells, T- and B-lymphocytes.

It localises to the nucleus. It is found in the cytoplasm. DNA-binding protein which is required for efficient transcription-coupled nucleotide excision repair (TC-NER). Acts as part of a TC-NER complex which assembles and interacts with RNA polymerase II (RNAPII) when it stalls at DNA lesions. TC-NER complex subunit UVSSA binds to the GTF2H1/p62 subunit of the TFIIH transcription factor complex, tethering TFIIH to the TC-NER complex. WHR1/STK19 then interacts with the XPD helicase subunit of TFIIH which guides TFIIH to DNA downstream of the stalled RNAPII, ensuring DNA repair. Directly interacts with RNAPII and also binds to downstream DNA. Promotes the timely removal of DNA damage-stalled RNAPII, allowing downstream NER factors to access DNA lesions. Required for monoubiquitination of UVSSA. Regulates repositioning and stabilization of UVSSA within the TC-NER complex. Stimulates ubiquitination of RNAPII complex member RBP1. Also binds to RNA and regulates the expression levels of many mRNAs. The sequence is that of Winged helix repair factor 1 from Homo sapiens (Human).